The sequence spans 739 residues: MAPSFDTLSEQDLHEEEVEIDFSDLKAQYEVRLEEGLDAFVVIDGLPVVPEESKPKLIKFLLKKLNTVGRTREDAIFMPLNEKGMSEGFAFVEYDTPEQAIAATKHLHGTPLDKKHTLAVNKLTDIDRYGREGRVDEEYTPPKIEPFQEKEHLRSWLGDPNARDQFAMYRGDKVGVFWNMKNNPPENVVDRDHWTQLFVQWSPLGTYLASVHPQGVQLWGGPQFGKQKQFPHPFVSLMEFSPGEKYLTTWSSRPIQLDGPPGALSYEEEGKNIIIWDITTGKPLRSFVSHELAAPAGPDGDAAQAKKKVQWPAFKWSADEKFVARMLPGQSISIYELPRMNLLDRTSVKIEGVMDFEWSPATVQREGVKQSEQLLSFWTPEIGSNPAKVGLMSIPSKEVVRTRNLFNVSDVKLHWQSQGAYVCVKVDRHSKSKKSLATNLEIFRVREKGVPVEVVDSLKDTVINFAWEPKGNRFVLITTGEVPTGTAVPPKTAVSFFAPEKTKSGAAGNFKLVRTIEKKTSNGIYWSPKGRFVVVATVHSQQHFDIDFWDLDFEGEKPENEKDLSANLQLMKTNEHFGVTDIDWDPTGRYVVSSASAWTHSLENGYHIHTFSGTTLTEHAVEKFKQLVWRPRPPTLLSKEEQKKVRRNLREYSREFDEEDKYAVDIANTAIVEMRKRLLNEWTAWLKKEKEMVEEEREVLGLPKYEEEPAAKPTPGAEDDTIVEEIVEEIIEESEEIVA.

The region spanning 39–125 is the RRM domain; sequence AFVVIDGLPV…HTLAVNKLTD (87 aa). WD repeat units follow at residues 191-229, 231-288, 457-498, 516-559, and 574-612; these read RDHW…KQKQ, PHPF…RSFV, SLKD…SFFA, IEKK…EKPE, and NEHF…HTFS.

Belongs to the eIF-3 subunit B family. As to quaternary structure, component of the eukaryotic translation initiation factor 3 (eIF-3) complex.

It localises to the cytoplasm. Its function is as follows. RNA-binding component of the eukaryotic translation initiation factor 3 (eIF-3) complex, which is involved in protein synthesis of a specialized repertoire of mRNAs and, together with other initiation factors, stimulates binding of mRNA and methionyl-tRNAi to the 40S ribosome. The eIF-3 complex specifically targets and initiates translation of a subset of mRNAs involved in cell proliferation. This Coccidioides immitis (strain RS) (Valley fever fungus) protein is Eukaryotic translation initiation factor 3 subunit B.